A 580-amino-acid chain; its full sequence is MASITGHCVAHFTDLSTRKSSFFSNSNNNSSLFRRKSTNIVTRKKYIFCSTSLSMNGCNGDPRAPVGTIETRTLPAVSTPALAMERLSSAVANLKSTLPSAQSGIIRLEVPIEEHIEALDWLHSQDQKNLLPRCYFSGRSQVTFSDFTSNDLTNRNGSAANGHLQRISTSSDDKNLVSVAGVGSAVLFRSPNPFSFDDWLSIKRFLSKNCPLIRAYGAIRFDARPHIAPEWKAFGSFYFVVPQVEFDELHGSSMIAATVAWDNALSLTYQQAIVALQTTMEQVSSTVSKLRQDVSHTSLVSKANIPDRTSWDLTLNRVLEEIGNKYSPLTKVVLARRSQVITTSDIDPLAWLSSFKADGKDAYQFCLQPHEAPAFIGNTPEQLFGRDQLTVFSEALAATRARGESDSLDLQMAHDLFSSPKDNHEFAIVRENIRQKLDAICTSVETEPMKSVRKLKRIQHLYARFAGRLRSEDDEFKILSSLHPTPAVCGFPMEDARKFIAENEMFDRGLYAGPVGFFGGAQSDFSVGIRSALIGKDAGALIYAGLGVVEGSDPALEWQELELKASQFMKLMKLEAPALK.

A chloroplast-targeting transit peptide spans 1 to 91; it reads MASITGHCVA…LAMERLSSAV (91 aa).

It belongs to the isochorismate synthase family. Mg(2+) is required as a cofactor.

Its subcellular location is the plastid. It localises to the chloroplast. The enzyme catalyses chorismate = isochorismate. With respect to regulation, not inhibited by Tyr, Phe or Trp. Its function is as follows. Involved in the synthesis of o-succinylbenzoic acid, 2,3-dihydroxybenzoic acid and salicylic acid (SA). This chain is Isochorismate synthase, chloroplastic, found in Catharanthus roseus (Madagascar periwinkle).